The primary structure comprises 205 residues: Mitochondrial ATP-independent inner membrane protease subunit 2 (205 aa).

Catalysis depends on residues Glu59 and Arg104.

This sequence belongs to the peptidase S26 family. IMP1 subfamily. As to quaternary structure, heterodimer of 2 subunits, IMP1A/B and IMP12.

It is found in the mitochondrion inner membrane. Its function is as follows. Catalyzes the removal of transit peptides required for the targeting of proteins from the mitochondrial matrix, across the inner membrane, into the inter-membrane space. The polypeptide is Mitochondrial ATP-independent inner membrane protease subunit 2 (Arabidopsis thaliana (Mouse-ear cress)).